We begin with the raw amino-acid sequence, 301 residues long: Probable deoxyhypusine synthase 1 (301 aa).

The Nucleophile role is filled by Lys-269.

Belongs to the deoxyhypusine synthase family. Requires NAD(+) as cofactor.

It catalyses the reaction [eIF5A protein]-L-lysine + spermidine = [eIF5A protein]-deoxyhypusine + propane-1,3-diamine. It participates in protein modification; eIF5A hypusination. Catalyzes the NAD-dependent oxidative cleavage of spermidine and the subsequent transfer of the butylamine moiety of spermidine to the epsilon-amino group of a specific lysine residue of the eIF-5A precursor protein to form the intermediate deoxyhypusine residue. The polypeptide is Probable deoxyhypusine synthase 1 (dys1) (Archaeoglobus fulgidus (strain ATCC 49558 / DSM 4304 / JCM 9628 / NBRC 100126 / VC-16)).